We begin with the raw amino-acid sequence, 393 residues long: UDP-galactose translocator (393 aa).

Transmembrane regions (helical) follow at residues 3–23, 37–57, 65–85, 97–117, 140–160, 169–189, 200–220, 238–258, 269–289, and 315–335; these read AVGS…AGAL, YISL…IRYA, FFAT…CLLL, LVLF…KLAV, TFQV…VLML, WASL…QAGG, GVGL…GVYF, LGLF…GTAV, PAVW…AVVV, and LFGF…IGAV. Residues 353-393 are disordered; the sequence is APTSGPCTHQQPPGQPPPPQLSSHHGDLSTEPFLPKSVLVK.

It belongs to the nucleotide-sugar transporter family. SLC35A subfamily. As to quaternary structure, interacts with SLC35A3; the interaction is reduced in the presence of SLC35A4. Found in a complex with SLC35A3 and SLC35A4.

Its subcellular location is the golgi apparatus membrane. The catalysed reaction is UMP(out) + UDP-alpha-D-galactose(in) = UMP(in) + UDP-alpha-D-galactose(out). It catalyses the reaction UDP-N-acetyl-alpha-D-galactosamine(in) + UMP(out) = UDP-N-acetyl-alpha-D-galactosamine(out) + UMP(in). It carries out the reaction UMP(out) + UDP-alpha-D-glucose(in) = UMP(in) + UDP-alpha-D-glucose(out). The enzyme catalyses UMP(out) + UDP-N-acetyl-alpha-D-glucosamine(in) = UMP(in) + UDP-N-acetyl-alpha-D-glucosamine(out). The catalysed reaction is UDP-alpha-D-galactose(in) + AMP(out) = UDP-alpha-D-galactose(out) + AMP(in). It catalyses the reaction UDP-alpha-D-galactose(in) + CMP(out) = UDP-alpha-D-galactose(out) + CMP(in). It carries out the reaction UDP-N-acetyl-alpha-D-galactosamine(out) + UDP-alpha-D-galactose(in) = UDP-N-acetyl-alpha-D-galactosamine(in) + UDP-alpha-D-galactose(out). The enzyme catalyses UDP-N-acetyl-alpha-D-glucosamine(out) + UDP-alpha-D-galactose(in) = UDP-N-acetyl-alpha-D-glucosamine(in) + UDP-alpha-D-galactose(out). The catalysed reaction is UDP-alpha-D-galactose(in) + UDP-alpha-D-glucose(out) = UDP-alpha-D-galactose(out) + UDP-alpha-D-glucose(in). It catalyses the reaction UMP(out) + CMP(in) = UMP(in) + CMP(out). It carries out the reaction UMP(out) + AMP(in) = UMP(in) + AMP(out). Its function is as follows. Transports uridine diphosphate galactose (UDP-galactose) from the cytosol into the Golgi apparatus, functioning as an antiporter that exchanges UDP-galactose for UMP. It is also able to exchange UDP-galactose for AMP and CMP, and to transport UDP-N-acetylgalactosamine (UDP-GalNAc) and other nucleotide sugars. As a provider of UDP-galactose to galactosyltransferases present in the Golgi apparatus, it is necessary for globotriaosylceramide/globoside (Gb3Cer) synthesis from lactosylceramide. This Bos taurus (Bovine) protein is UDP-galactose translocator.